Consider the following 142-residue polypeptide: Translation initiation factor 2 subunit beta (142 aa).

Belongs to the eIF-2-beta/eIF-5 family. In terms of assembly, heterotrimer composed of an alpha, a beta and a gamma chain.

In terms of biological role, eIF-2 functions in the early steps of protein synthesis by forming a ternary complex with GTP and initiator tRNA. This is Translation initiation factor 2 subunit beta from Staphylothermus marinus (strain ATCC 43588 / DSM 3639 / JCM 9404 / F1).